The chain runs to 338 residues: Glycerol-3-phosphate dehydrogenase [NAD(P)+] (338 aa).

NADPH contacts are provided by serine 12, tryptophan 13, and lysine 110. The sn-glycerol 3-phosphate site is built by lysine 110, glycine 141, and serine 143. An NADPH-binding site is contributed by alanine 145. The sn-glycerol 3-phosphate site is built by lysine 196, aspartate 249, serine 259, arginine 260, and asparagine 261. The active-site Proton acceptor is lysine 196. NADPH is bound at residue arginine 260. Valine 284 and glutamate 286 together coordinate NADPH.

Belongs to the NAD-dependent glycerol-3-phosphate dehydrogenase family.

It localises to the cytoplasm. It carries out the reaction sn-glycerol 3-phosphate + NAD(+) = dihydroxyacetone phosphate + NADH + H(+). The enzyme catalyses sn-glycerol 3-phosphate + NADP(+) = dihydroxyacetone phosphate + NADPH + H(+). It functions in the pathway membrane lipid metabolism; glycerophospholipid metabolism. Its function is as follows. Catalyzes the reduction of the glycolytic intermediate dihydroxyacetone phosphate (DHAP) to sn-glycerol 3-phosphate (G3P), the key precursor for phospholipid synthesis. This is Glycerol-3-phosphate dehydrogenase [NAD(P)+] from Pediococcus pentosaceus (strain ATCC 25745 / CCUG 21536 / LMG 10740 / 183-1w).